The sequence spans 490 residues: Probable cytosol aminopeptidase (490 aa).

Positions 257 and 262 each coordinate Mn(2+). The active site involves Lys269. Mn(2+)-binding residues include Asp281, Asp341, and Glu343. Residue Arg345 is part of the active site.

This sequence belongs to the peptidase M17 family. Mn(2+) serves as cofactor.

The protein resides in the cytoplasm. It carries out the reaction Release of an N-terminal amino acid, Xaa-|-Yaa-, in which Xaa is preferably Leu, but may be other amino acids including Pro although not Arg or Lys, and Yaa may be Pro. Amino acid amides and methyl esters are also readily hydrolyzed, but rates on arylamides are exceedingly low.. It catalyses the reaction Release of an N-terminal amino acid, preferentially leucine, but not glutamic or aspartic acids.. Functionally, presumably involved in the processing and regular turnover of intracellular proteins. Catalyzes the removal of unsubstituted N-terminal amino acids from various peptides. The chain is Probable cytosol aminopeptidase from Prochlorococcus marinus (strain MIT 9215).